The chain runs to 77 residues: Large ribosomal subunit protein eL20 (77 aa).

This sequence belongs to the eukaryotic ribosomal protein eL20 family. As to quaternary structure, part of the 50S ribosomal subunit. Binds 23S rRNA.

The chain is Large ribosomal subunit protein eL20 from Thermococcus onnurineus (strain NA1).